The following is a 378-amino-acid chain: Neutral protease 2 homolog ARB_04336 (378 aa).

An N-terminal signal peptide occupies residues 1–19 (MKFFTALAAVGALLAPAVA). Positions 20–186 (LPTPASEASH…DYFSKGLDKR (167 aa)) are excised as a propeptide. 2 cysteine pairs are disulfide-bonded: C192/C262 and C269/C287. H311 is a binding site for Zn(2+). E312 is an active-site residue. 2 residues coordinate Zn(2+): H315 and D326.

This sequence belongs to the peptidase M35 family. It depends on Zn(2+) as a cofactor.

It is found in the secreted. The enzyme catalyses Preferential cleavage of bonds with hydrophobic residues in P1'. Also 3-Asn-|-Gln-4 and 8-Gly-|-Ser-9 bonds in insulin B chain.. Functionally, secreted metalloproteinase that allows assimilation of proteinaceous substrates. Shows high activities on basic nuclear substrates such as histone and protamine. May be involved in virulence. The sequence is that of Neutral protease 2 homolog ARB_04336 from Arthroderma benhamiae (strain ATCC MYA-4681 / CBS 112371) (Trichophyton mentagrophytes).